Here is a 375-residue protein sequence, read N- to C-terminus: Leucoanthocyanidin dioxygenase 1 (375 aa).

Residues Leu-218–Pro-317 enclose the Fe2OG dioxygenase domain. 3 residues coordinate Fe cation: His-242, Asp-244, and His-298. Arg-308 contacts 2-oxoglutarate.

Belongs to the iron/ascorbate-dependent oxidoreductase family. The cofactor is L-ascorbate. It depends on Fe(2+) as a cofactor.

It carries out the reaction a (2R,3S,4S)-leucoanthocyanidin + 2-oxoglutarate + O2 = a 4-H-anthocyanidin with a 3-hydroxy group + succinate + CO2 + 2 H2O. The protein operates within pigment biosynthesis; anthocyanin biosynthesis. Functionally, involved in anthocyanin and protoanthocyanidin biosynthesis by catalyzing the oxidation of leucoanthocyanidins into anthocyanidins. Is able to synthesize anthocyanin pigments from leucoanthocyanidins in aleurone tissue. Converts dihydroquercetin to quercetin in vitro. In Oryza sativa subsp. indica (Rice), this protein is Leucoanthocyanidin dioxygenase 1.